The sequence spans 1820 residues: Cation channel sperm-associated targeting subunit tau (1820 aa).

Residues 87–222 form the C2 domain; that stretch reads DSEELEITQE…QKGCFIEEVQ (136 aa). 4 disordered regions span residues 360–383, 403–443, 695–722, and 838–857; these read SEET…ELEN, LLDN…TEVH, EVSM…SSME, and SSTK…SGSS. The span at 415–443 shows a compositional bias: polar residues; that stretch reads PTLNQSDQDNSTADASKNDESTPSPTEVH.

In terms of assembly, component of the CatSper complex or CatSpermasome composed of the core pore-forming members CATSPER1, CATSPER2, CATSPER3 and CATSPER4 as well as auxiliary members CATSPERB, CATSPERG, CATSPERD, CATSPERE, CATSPERZ, C2CD6/CATSPERT, TMEM249, TMEM262 and EFCAB9. HSPA1 may be an additional auxiliary complex member. The core complex members CATSPER1, CATSPER2, CATSPER3 and CATSPER4 form a heterotetrameric channel. The auxiliary CATSPERB, CATSPERG, CATSPERD and CATSPERE subunits form a pavilion-like structure over the pore which stabilizes the complex through interactions with CATSPER4, CATSPER3, CATSPER1 and CATSPER2 respectively. SLCO6C1 interacts with CATSPERE and TMEM262/CATSPERH interacts with CATSPERB, further stabilizing the complex. C2CD6/CATSPERT interacts at least with CATSPERD and is required for targeting the CatSper complex in the flagellar membrane. Expressed in testis (at protein level).

The protein resides in the cell projection. It is found in the cilium. The protein localises to the flagellum membrane. Auxiliary component of the CatSper complex, a complex involved in sperm cell hyperactivation. Sperm cell hyperactivation is needed for sperm motility which is essential late in the preparation of sperm for fertilization. Required for CatSper complex targeting and trafficking into the quadrilinear nanodomains. Targets the preassembled CatSper complexes to elongating flagella, where it links the channel-carrying vesicles and motor proteins. This chain is Cation channel sperm-associated targeting subunit tau, found in Homo sapiens (Human).